The sequence spans 173 residues: Protein PLASTID REDOX INSENSITIVE 2, chloroplastic (173 aa).

The transit peptide at Met-1–Arg-55 directs the protein to the chloroplast.

Its subcellular location is the plastid. The protein resides in the chloroplast stroma. It is found in the chloroplast nucleoid. Its function is as follows. Required for the activity of the plastid-encoded RNA polymerase (PEP) and full expression of genes transcribed by PEP. The sequence is that of Protein PLASTID REDOX INSENSITIVE 2, chloroplastic from Zea mays (Maize).